The following is a 288-amino-acid chain: Urease accessory protein UreD 1 (288 aa).

A compositionally biased stretch (pro residues) spans 1 to 10 (MHGPLAPAPS). Positions 1–35 (MHGPLAPAPSPERLGAAPARQRSDGRIRLRVGPAR) are disordered.

Belongs to the UreD family. UreD, UreF and UreG form a complex that acts as a GTP-hydrolysis-dependent molecular chaperone, activating the urease apoprotein by helping to assemble the nickel containing metallocenter of UreC. The UreE protein probably delivers the nickel.

Its subcellular location is the cytoplasm. Its function is as follows. Required for maturation of urease via the functional incorporation of the urease nickel metallocenter. This Methylobacterium radiotolerans (strain ATCC 27329 / DSM 1819 / JCM 2831 / NBRC 15690 / NCIMB 10815 / 0-1) protein is Urease accessory protein UreD 1.